Here is a 347-residue protein sequence, read N- to C-terminus: UDP-3-O-acylglucosamine N-acyltransferase 1 (347 aa).

His-246 (proton acceptor) is an active-site residue.

Belongs to the transferase hexapeptide repeat family. LpxD subfamily. In terms of assembly, homotrimer.

It carries out the reaction a UDP-3-O-[(3R)-3-hydroxyacyl]-alpha-D-glucosamine + a (3R)-hydroxyacyl-[ACP] = a UDP-2-N,3-O-bis[(3R)-3-hydroxyacyl]-alpha-D-glucosamine + holo-[ACP] + H(+). It functions in the pathway bacterial outer membrane biogenesis; LPS lipid A biosynthesis. Its function is as follows. Catalyzes the N-acylation of UDP-3-O-acylglucosamine using 3-hydroxyacyl-ACP as the acyl donor. Is involved in the biosynthesis of lipid A, a phosphorylated glycolipid that anchors the lipopolysaccharide to the outer membrane of the cell. The sequence is that of UDP-3-O-acylglucosamine N-acyltransferase 1 from Francisella tularensis subsp. tularensis (strain SCHU S4 / Schu 4).